The chain runs to 312 residues: L-type lectin-like domain-containing protein C126.08c (312 aa).

An N-terminal signal peptide occupies residues 1–22; that stretch reads MFFSVKNVFLLGIFGFVLGALA. Residues 23 to 280 are Extracellular-facing; it reads ETSHLERLSL…QKKGSFKKRL (258 aa). The 225-residue stretch at 24–248 folds into the L-type lectin-like domain; that stretch reads TSHLERLSLE…EIASILSRTI (225 aa). Residues 281–301 traverse the membrane as a helical segment; sequence IILLLSLIVIFSIFALRSYQV. The Cytoplasmic segment spans residues 302-312; that stretch reads QQEKNRRTTVL.

The protein localises to the membrane. It is found in the endoplasmic reticulum. It localises to the golgi apparatus. Its subcellular location is the vacuole. This is L-type lectin-like domain-containing protein C126.08c from Schizosaccharomyces pombe (strain 972 / ATCC 24843) (Fission yeast).